A 1088-amino-acid chain; its full sequence is Myocardin-related transcription factor B (1088 aa).

Glu-22 bears the Phosphoserine mark. One copy of the RPEL 1 repeat lies at 40-65 (EVLQLRLQQRRTREQLVDQGIMPPLK). Ser-66 carries the phosphoserine modification. 2 RPEL repeats span residues 84–109 (NFLK…EETF) and 128–153 (DDLN…PVDS). Disordered regions lie at residues 165 to 310 (EDYP…NEPQ), 349 to 389 (KPLN…PSSL), 472 to 508 (AELP…STDD), and 528 to 553 (LSSS…SNLE). Residues 197-213 (SAASPSEPKVSESPSPV) show a composition bias toward low complexity. Polar residues predominate over residues 214 to 226 (TTNTPAQFASVSP). Over residues 238–248 (ADQPPPRPAAP) the composition is skewed to pro residues. The segment covering 272–287 (NPNDKHRSKKCKDPKP) has biased composition (basic and acidic residues). Positions 355–366 (NSNSGNSALNNA) are enriched in low complexity. Phosphothreonine occurs at positions 367 and 370. Residues 367-378 (TPNTPRQNTSTP) show a composition bias toward polar residues. One can recognise an SAP domain in the interval 389 to 423 (LDDLKVSELKTELKLRGLPVSGTKPDLIERLKPYQ). Over residues 528–540 (LSSSPLRMTNNED) the composition is skewed to polar residues. A phosphoserine mark is found at Ser-541 and Ser-543. The span at 541 to 550 (SLSPTSSTLS) shows a compositional bias: low complexity. Residues 545-601 (TSSTLSNLELDAAEKDRKLQEKEKQIEELKRKLEQEQKLVEVLKMQLEVEKRGQQQR) adopt a coiled-coil conformation. The required for interaction with itself and with MRTFA stretch occupies residues 563–591 (LQEKEKQIEELKRKLEQEQKLVEVLKMQL). Disordered regions lie at residues 595–655 (KRGQ…QPVS) and 829–886 (NAPL…STQA). Lys-628 participates in a covalent cross-link: Glycyl lysine isopeptide (Lys-Gly) (interchain with G-Cter in SUMO1). Over residues 829-838 (NAPLPSLQNG) the composition is skewed to polar residues. Residues 867–879 (KTKDPPRYEEAIK) show a composition bias toward basic and acidic residues. A Phosphoserine modification is found at Ser-921.

Interacts with MRTFA and SRF. In terms of processing, O-glycosylated.

The protein localises to the nucleus. Its function is as follows. Acts as a transcriptional coactivator of serum response factor (SRF). Required for skeletal myogenic differentiation. The sequence is that of Myocardin-related transcription factor B from Homo sapiens (Human).